The primary structure comprises 424 residues: Glutamyl-tRNA reductase (424 aa).

Residues 50-53, serine 98, 103-105, and glutamine 109 contribute to the substrate site; these read TCNR and EDQ. The active-site Nucleophile is the cysteine 51. Residue 178 to 183 participates in NADP(+) binding; the sequence is GSGEMG.

It belongs to the glutamyl-tRNA reductase family. In terms of assembly, homodimer.

It catalyses the reaction (S)-4-amino-5-oxopentanoate + tRNA(Glu) + NADP(+) = L-glutamyl-tRNA(Glu) + NADPH + H(+). Its pathway is porphyrin-containing compound metabolism; protoporphyrin-IX biosynthesis; 5-aminolevulinate from L-glutamyl-tRNA(Glu): step 1/2. Functionally, catalyzes the NADPH-dependent reduction of glutamyl-tRNA(Glu) to glutamate 1-semialdehyde (GSA). The chain is Glutamyl-tRNA reductase from Methanoregula boonei (strain DSM 21154 / JCM 14090 / 6A8).